A 419-amino-acid chain; its full sequence is Transcription termination factor Rho (419 aa).

In terms of domain architecture, Rho RNA-BD spans 48-123 (DIFGDGVLEI…LKVNEVNYDK (76 aa)). RNA-binding stretches follow at residues 61–66 (GFGFLR), 78–80 (DIY), and 108–110 (ERY). ATP-binding positions include 169–174 (GRGQRG), 181–186 (KAGKTM), and Arg212. An RNA-binding 2 region spans residues 284-288 (VLTGG).

The protein belongs to the Rho family. In terms of assembly, homohexamer. The homohexamer assembles into an open ring structure.

Facilitates transcription termination by a mechanism that involves Rho binding to the nascent RNA, activation of Rho's RNA-dependent ATPase activity, and release of the mRNA from the DNA template. The polypeptide is Transcription termination factor Rho (Salmonella typhi).